A 383-amino-acid polypeptide reads, in one-letter code: MTAAITYEHIKTCKQSGARLGRVHTPHGTIETPMFMPVGTLATVKTMSPEDLKAMDAQIILSNTYHLWLRPGEEIIKEAGGLHQFMNWDKPILTDSGGFQVFSLSDLRKITEEGVHFRNHLSGEKLFLSPEKAMQIQHVLGSDIMMAFDECPPYPADHSYMKASVERTSRWAERCLAEHKRSGKDSVQGLFGIIQGGEYEDLRKQSANDLTALDFPGYAVGGLSVGEPKDVMNHVLEFTTPLMPEDKPRYLMGVGSPDSLIDGAIRGIDMFDCVLPTRIARNGTCMTSAGRLVVRNAKYARDFSPLDEKCDCHVCRTYSRAYIRHLIKCEETFGFRLTTYHNLYFLLNLMKQVRQAIMDDCLLDFREQFFEEYGFNKENARNF.

Asp95 acts as the Proton acceptor in catalysis. Substrate is bound by residues 95–99 (DSGGF), Asp149, Gln195, and Gly222. Positions 253 to 259 (GVGSPDS) are RNA binding. Asp272 (nucleophile) is an active-site residue. The RNA binding; important for wobble base 34 recognition stretch occupies residues 277–281 (TRIAR). Zn(2+)-binding residues include Cys310, Cys312, Cys315, and His341.

This sequence belongs to the queuine tRNA-ribosyltransferase family. As to quaternary structure, homodimer. Within each dimer, one monomer is responsible for RNA recognition and catalysis, while the other monomer binds to the replacement base PreQ1. It depends on Zn(2+) as a cofactor.

The enzyme catalyses 7-aminomethyl-7-carbaguanine + guanosine(34) in tRNA = 7-aminomethyl-7-carbaguanosine(34) in tRNA + guanine. Its pathway is tRNA modification; tRNA-queuosine biosynthesis. In terms of biological role, catalyzes the base-exchange of a guanine (G) residue with the queuine precursor 7-aminomethyl-7-deazaguanine (PreQ1) at position 34 (anticodon wobble position) in tRNAs with GU(N) anticodons (tRNA-Asp, -Asn, -His and -Tyr). Catalysis occurs through a double-displacement mechanism. The nucleophile active site attacks the C1' of nucleotide 34 to detach the guanine base from the RNA, forming a covalent enzyme-RNA intermediate. The proton acceptor active site deprotonates the incoming PreQ1, allowing a nucleophilic attack on the C1' of the ribose to form the product. After dissociation, two additional enzymatic reactions on the tRNA convert PreQ1 to queuine (Q), resulting in the hypermodified nucleoside queuosine (7-(((4,5-cis-dihydroxy-2-cyclopenten-1-yl)amino)methyl)-7-deazaguanosine). The polypeptide is Queuine tRNA-ribosyltransferase (Shouchella clausii (strain KSM-K16) (Alkalihalobacillus clausii)).